Here is a 482-residue protein sequence, read N- to C-terminus: Programmed cell death protein 7 (482 aa).

2 disordered regions span residues 1–136 and 151–170; these read MALP…GDAA and GNPR…GPSL. Residues 13-48 are compositionally biased toward pro residues; it reads GPPPPQPPPSAPFGCPPPPLPSPAFPPPLPQRPGPF. Low complexity predominate over residues 49 to 71; sequence PGASAPFLQPPLALQPRAPAEAS. Composition is skewed to pro residues over residues 82-100 and 109-130; these read PVPP…PFPG and PPPP…PPPD. Positions 151–168 are enriched in low complexity; that stretch reads GNPRRPGGLRTPRTPAGP. Residues 233–408 adopt a coiled-coil conformation; the sequence is EARRRLERVR…LQKREIESKL (176 aa).

In terms of assembly, interacts with RBM40. Component of the U11/U12 snRNPs that are part of the U12-type spliceosome. Highly expressed in testis, thymus and lymph nodes. Detected at low levels in embryonic stem cells.

The protein resides in the nucleus. In terms of biological role, promotes apoptosis when overexpressed. In Mus musculus (Mouse), this protein is Programmed cell death protein 7 (Pdcd7).